Consider the following 708-residue polypeptide: MEANHQRNDLGLVALTMLAQYHNISLNPEEIKHKFDLDGKGLSLTSWLLAAKSLALKAKHIKKEISRLHLVNLPALVWQDNGKHFLLVKVDTDNNRYLTYNLEQDAPQILSQDEFEACYQGQLILVTSRASVVGQLAKFDFTWFIPAVIKYRKIFLETLIVSIFLQIFALITPLFFQVVMDKVLVHRGFSTLNIITVALAIVIIFEIVLSGLRTYVFSHSTSRIDVELGAKLFRHLLSLPISYFENRRVGDTVARVRELDQIRNFLTGQALTSVLDLLFSFIFFAVMWYYSPKLTLVILGSLPCYILWSIFISPILRRRLDDKFARSADNQAFLVESVTAINMIKAMAVAPQMTDTWDKQLASYVSSSFRVTVLATIGQQGVQLIQKTVMVINLWLGAHLVISGDLSIGQLIAFNMLSGQVIAPVIRLAQLWQDFQQVGISVTRLGDVLNSPTEQYQGKLSLPEIKGDISFKNIRFRYKPDAPTILNNVNLEIRQGEVIGIVGRSGSGKSTLTKLLQRFYIPENGQVLIDGHDLALADPNWLRRQIGVVLQDNVLLNRSIRENIALSDPGMPMERVIYAAKLAGAHDFISELREGYNTIVGEQGAGLSGGQRQRIAIARALVNNPKILIFDEATSALDYESEHIIMQNMQKICQGRTVILIAHRLSTVKNADRIIVMEKGEIVEQGKHHELLQNSNGLYSYLHQLQLN.

The Peptidase C39 domain maps to methionine 1–valine 126. Residues phenylalanine 155–glutamine 437 enclose the ABC transmembrane type-1 domain. 5 helical membrane passes run leucine 159 to valine 179, leucine 192 to leucine 212, alanine 270 to tyrosine 290, leucine 296 to leucine 316, and valine 389 to glycine 409. The 236-residue stretch at isoleucine 469 to glutamine 704 folds into the ABC transporter domain. Position 503–510 (glycine 503–serine 510) interacts with ATP.

It belongs to the ABC transporter superfamily. Protein-1 exporter (TC 3.A.1.109) family. In terms of assembly, homodimer.

The protein resides in the cell inner membrane. The catalysed reaction is ATP + H2O + proteinSide 1 = ADP + phosphate + proteinSide 2.. Part of the ABC transporter complex LktBD involved in leukotoxin export. Transmembrane domains (TMD) form a pore in the inner membrane and the ATP-binding domain (NBD) is responsible for energy generation. This Mannheimia haemolytica (Pasteurella haemolytica) protein is Leukotoxin translocation ATP-binding protein LktB (lktB).